We begin with the raw amino-acid sequence, 481 residues long: Cytochrome c oxidase subunit 1 (481 aa).

Residues isoleucine 22–isoleucine 42 form a helical membrane-spanning segment. Residues glutamate 45 and glycine 50 each contribute to the Ca(2+) site. Transmembrane regions (helical) follow at residues leucine 64 to glycine 84, serine 109 to glycine 129, phenylalanine 151 to isoleucine 171, isoleucine 194 to methionine 214, leucine 240 to isoleucine 260, methionine 278 to valine 298, tyrosine 309 to valine 329, and leucine 343 to valine 363. Fe(II)-heme a is bound at residue histidine 69. Histidine 246 contacts Cu cation. Positions histidine 246–tyrosine 250 form a cross-link, 1'-histidyl-3'-tyrosine (His-Tyr). Tyrosine 250 provides a ligand contact to O2. Positions 374 and 375 each coordinate Mg(2+). Heme a3 is bound at residue histidine 382. 2 helical membrane-spanning segments follow: residues histidine 382 to isoleucine 402 and isoleucine 420 to phenylalanine 440. Histidine 384 is a Fe(II)-heme a binding site. Proline 448 serves as a coordination point for Ca(2+). Residues phenylalanine 459–isoleucine 479 traverse the membrane as a helical segment.

Belongs to the heme-copper respiratory oxidase family. As to quaternary structure, component of the cytochrome c oxidase (complex IV, CIV), a multisubunit enzyme composed of a catalytic core of 3 subunits and several supernumerary subunits. The complex exists as a monomer or a dimer and forms supercomplexes (SCs) in the inner mitochondrial membrane with ubiquinol-cytochrome c oxidoreductase (cytochrome b-c1 complex, complex III, CIII). The cofactor is heme. It depends on Cu cation as a cofactor.

The protein localises to the mitochondrion inner membrane. The enzyme catalyses 4 Fe(II)-[cytochrome c] + O2 + 8 H(+)(in) = 4 Fe(III)-[cytochrome c] + 2 H2O + 4 H(+)(out). Its pathway is energy metabolism; oxidative phosphorylation. In terms of biological role, component of the cytochrome c oxidase, the last enzyme in the mitochondrial electron transport chain which drives oxidative phosphorylation. The respiratory chain contains 3 multisubunit complexes succinate dehydrogenase (complex II, CII), ubiquinol-cytochrome c oxidoreductase (cytochrome b-c1 complex, complex III, CIII) and cytochrome c oxidase (complex IV, CIV), that cooperate to transfer electrons derived from NADH and succinate to molecular oxygen, creating an electrochemical gradient over the inner membrane that drives transmembrane transport and the ATP synthase. Cytochrome c oxidase is the component of the respiratory chain that catalyzes the reduction of oxygen to water. Electrons originating from reduced cytochrome c in the intermembrane space (IMS) are transferred via the dinuclear copper A center (CU(A)) of subunit 2 and heme A of subunit 1 to the active site in subunit 1, a binuclear center (BNC) formed by heme A3 and copper B (CU(B)). The BNC reduces molecular oxygen to 2 water molecules using 4 electrons from cytochrome c in the IMS and 4 protons from the mitochondrial matrix. This chain is Cytochrome c oxidase subunit 1 (MT-CO1), found in Theileria parva (East coast fever infection agent).